A 245-amino-acid polypeptide reads, in one-letter code: Transmembrane protein 69 (245 aa).

5 helical membrane passes run 97-117 (ALYI…LMVI), 122-142 (IPVL…FLGG), 159-179 (YINL…ILFS), 185-205 (AIVT…FLLP), and 216-236 (IVST…ENIY).

The protein localises to the membrane. This is Transmembrane protein 69 (Tmem69) from Mus musculus (Mouse).